The following is a 138-amino-acid chain: Thyrotropin subunit beta (138 aa).

The first 20 residues, 1 to 20, serve as a signal peptide directing secretion; it reads MTAIFLMSVLFGLACGQAMS. 6 disulfide bridges follow: cysteine 22–cysteine 72, cysteine 36–cysteine 87, cysteine 39–cysteine 125, cysteine 47–cysteine 103, cysteine 51–cysteine 105, and cysteine 108–cysteine 115. Residue asparagine 43 is glycosylated (N-linked (GlcNAc...) asparagine). A propeptide spanning residues 133–138 is cleaved from the precursor; sequence VVGLSI.

Belongs to the glycoprotein hormones subunit beta family. As to quaternary structure, heterodimer of a common alpha chain and a unique beta chain which confers biological specificity to thyrotropin, lutropin, follitropin and gonadotropin.

The protein localises to the secreted. Functionally, indispensable for the control of thyroid structure and metabolism. The chain is Thyrotropin subunit beta (TSHB) from Lama glama (Llama).